Reading from the N-terminus, the 209-residue chain is Probable GTP-binding protein EngB (209 aa).

The region spanning 24–198 is the EngB-type G domain; the sequence is EGMEVAFAGR…HGILDQWLGL (175 aa). Residues 32–39, 59–63, 77–80, 144–147, and 177–179 each bind GTP; these read GRSNAGKS, GRTQL, DLPG, TKAD, and FSA. Ser39 and Thr61 together coordinate Mg(2+).

It belongs to the TRAFAC class TrmE-Era-EngA-EngB-Septin-like GTPase superfamily. EngB GTPase family. The cofactor is Mg(2+).

Functionally, necessary for normal cell division and for the maintenance of normal septation. In Thioalkalivibrio sulfidiphilus (strain HL-EbGR7), this protein is Probable GTP-binding protein EngB.